The primary structure comprises 595 residues: Aspartate--tRNA ligase (595 aa).

Glu-180 serves as a coordination point for L-aspartate. Residues 204-207 (QLFK) form an aspartate region. Arg-226 contacts L-aspartate. ATP is bound by residues 226 to 228 (RDE) and Gln-235. An L-aspartate-binding site is contributed by His-454. ATP is bound at residue Glu-488. L-aspartate is bound at residue Arg-495. 540–543 (GLDR) is a binding site for ATP.

It belongs to the class-II aminoacyl-tRNA synthetase family. Type 1 subfamily. As to quaternary structure, homodimer.

Its subcellular location is the cytoplasm. The enzyme catalyses tRNA(Asp) + L-aspartate + ATP = L-aspartyl-tRNA(Asp) + AMP + diphosphate. In terms of biological role, catalyzes the attachment of L-aspartate to tRNA(Asp) in a two-step reaction: L-aspartate is first activated by ATP to form Asp-AMP and then transferred to the acceptor end of tRNA(Asp). In Clostridium acetobutylicum (strain ATCC 824 / DSM 792 / JCM 1419 / IAM 19013 / LMG 5710 / NBRC 13948 / NRRL B-527 / VKM B-1787 / 2291 / W), this protein is Aspartate--tRNA ligase.